Consider the following 189-residue polypeptide: MKKIVLYGGQFNPIHTAHMIVASEVFHELQPDEFYFLPSFMSPLKKHNNFIDVQHRLTMIQMIIDELGFGDICDDEIKRGGQSYTYDTIKAFKEQHKDSELYFVIGTDQYNQLEKWYQIEYLKEMVTFVVVNRDKNSQNVDNAMIAIQIPRVDISSTMIRQRVSEGKSIQVLVPKSVENYIKGEGLYEH.

It belongs to the NadD family.

It carries out the reaction nicotinate beta-D-ribonucleotide + ATP + H(+) = deamido-NAD(+) + diphosphate. Its pathway is cofactor biosynthesis; NAD(+) biosynthesis; deamido-NAD(+) from nicotinate D-ribonucleotide: step 1/1. Catalyzes the reversible adenylation of nicotinate mononucleotide (NaMN) to nicotinic acid adenine dinucleotide (NaAD). The chain is Probable nicotinate-nucleotide adenylyltransferase from Staphylococcus aureus (strain bovine RF122 / ET3-1).